Consider the following 204-residue polypeptide: MSRSSEDKQIEIYEFIKEQIIEKGYPPSVREICKGVGLSSTSSVHGHLSKLEKKGLIRRDSTKPRTIEILKEPIVPKEMVNIPILGKVTAGTPILAVENIEDTFPISLNFIPSNKDLFMLKISGESMIDAGILDGDLAIIEKTNTAKNGEIVVALIDNEVTLKRFFKEDKHIRLQPENKNMDPIILEDDSVSIVGKLAGIFRRY.

Positions 29–49 form a DNA-binding region, H-T-H motif; sequence VREICKGVGLSSTSSVHGHLS. Residues Ser-126 and Lys-163 each act as for autocatalytic cleavage activity in the active site.

The protein belongs to the peptidase S24 family. Homodimer.

It carries out the reaction Hydrolysis of Ala-|-Gly bond in repressor LexA.. Represses a number of genes involved in the response to DNA damage (SOS response), including recA and lexA. In the presence of single-stranded DNA, RecA interacts with LexA causing an autocatalytic cleavage which disrupts the DNA-binding part of LexA, leading to derepression of the SOS regulon and eventually DNA repair. The sequence is that of LexA repressor from Clostridium novyi (strain NT).